A 194-amino-acid chain; its full sequence is MDVNNVELVISAVRPEQYPETDLPEYALAGRSNVGKSSFINTMIRRKSMARISQKPGKTQTLNFYKIEEALFFVDVPGYGFAKVSKTEREKWGVMIETYITSREQLRGVIQIVDLRHKPTEDDRMMYEFLKYYDIPVIVVATKADKIPRSKWQKNAKIVRETLDFDPDDKFVLFSSETKMGKDEAWQFIKEGME.

The 173-residue stretch at 22-194 folds into the EngB-type G domain; it reads DLPEYALAGR…AWQFIKEGME (173 aa). GTP contacts are provided by residues 30–37, 57–61, 75–78, 142–145, and 174–176; these read GRSNVGKS, GKTQT, DVPG, TKAD, and FSS. Positions 37 and 59 each coordinate Mg(2+).

This sequence belongs to the TRAFAC class TrmE-Era-EngA-EngB-Septin-like GTPase superfamily. EngB GTPase family. Mg(2+) serves as cofactor.

Necessary for normal cell division and for the maintenance of normal septation. The chain is Probable GTP-binding protein EngB from Listeria innocua serovar 6a (strain ATCC BAA-680 / CLIP 11262).